Reading from the N-terminus, the 125-residue chain is MEMIKFGQDDIENAMADMGDAQIDDLAFGAIQLDETGTILAYNAAEGELTGRSPQDVIGKNFFKDIAPCTDTEEFGGRFREGVANGDLNAMFEYVFDYQMQPTKVKVHMKRAITGDSYWIFVKRV.

Residues 23–86 (IDDLAFGAIQ…GRFREGVANG (64 aa)) form the PAS domain. Cysteine 69 bears the S-(4-hydroxycinnamyl)cysteine mark.

Belongs to the photoactive yellow protein family. The 4-hydroxycinnamic acid (p-coumaric acid) chromophore is covalently bound via a thioester linkage.

Its function is as follows. This photoactive protein is a photoreceptor with kinetics similar to that of rhodopsin. This chain is Photoactive yellow protein (pyp), found in Rhodothalassium salexigens (Rhodospirillum salexigens).